We begin with the raw amino-acid sequence, 919 residues long: Phosphoenolpyruvate carboxylase (919 aa).

Catalysis depends on residues His138 and Lys579.

Belongs to the PEPCase type 1 family. Mg(2+) is required as a cofactor.

It carries out the reaction oxaloacetate + phosphate = phosphoenolpyruvate + hydrogencarbonate. With respect to regulation, activity not stimulated by acetyl-CoA in the absence of any allosteric inhibitor, while the corresponding protein from E.coli is strongly stimulated. Functionally, forms oxaloacetate, a four-carbon dicarboxylic acid source for the tricarboxylic acid cycle. The polypeptide is Phosphoenolpyruvate carboxylase (ppc) (Corynebacterium glutamicum (strain ATCC 13032 / DSM 20300 / JCM 1318 / BCRC 11384 / CCUG 27702 / LMG 3730 / NBRC 12168 / NCIMB 10025 / NRRL B-2784 / 534)).